The following is a 732-amino-acid chain: MNVERSEFLAGVGHDALWALIEGRHGDPFSILGPHESGGMTIVRVYLPGAEGVDLIEAASGRVVTPFSIAHPSGLFAAAMGSRMHYRLRITWPDGEQITEDPYSFGLLLGELDLHLISEGTHYSLSRTLGAVEMAIDDVAGVRFAVWAPNARRVSVVGDFNAWDGRRNPMRLRQSAGVWELFMPRLAPGERYKFEIIDPHGNCLPQKADPVARASEAAPSTASIVASSTRFRWTDDNWMKGQSRQQRLEGPISVYEVHAGSWLRENGGRSLDWVELSQRLVPYVREMGFTHIELLPIMEHPFGGSWGYQPLGLFAPTGRYGTPEDLAYFIDRCHGAGIGVILDWVPAHFPTDVWGLARFDGTALYEHEDPREGFHRDWNTLIYNLGRNEVKGFLIASALEWLERYHIDGLRVDAVASMLYRDYSRNEGEWIPNRYGGRENLEAVEFFKHLNSIVHERCPHAMMIAEESTAWPGVTKPPEEGGLGFDMKWNMGWMHDSLSYIEKDPVYRSYHHGTMTFGMIYAYSERFILPISHDEVVYGKGSLLGKMPGDEWQKFANLRSYLAFMWGHPGKKLIFMGGEIAQPSEWNHDASIAWDVLDQPAHAGLQRLVKDLNGFYKDEAALQFGDFHSEGFDWAAADDAVNSVLGMLRYAPDRSSSVLVVSNFTPVPRYGYRIGVPQDGVWIEKVTTDAREYGGSGLVNGAVSSESVPAHGRPHSLWLTLPPLATVLLKSP.

Aspartate 413 functions as the Nucleophile in the catalytic mechanism. The active-site Proton donor is the glutamate 466.

The protein belongs to the glycosyl hydrolase 13 family. GlgB subfamily. In terms of assembly, monomer.

It catalyses the reaction Transfers a segment of a (1-&gt;4)-alpha-D-glucan chain to a primary hydroxy group in a similar glucan chain.. It participates in glycan biosynthesis; glycogen biosynthesis. In terms of biological role, catalyzes the formation of the alpha-1,6-glucosidic linkages in glycogen by scission of a 1,4-alpha-linked oligosaccharide from growing alpha-1,4-glucan chains and the subsequent attachment of the oligosaccharide to the alpha-1,6 position. The polypeptide is 1,4-alpha-glucan branching enzyme GlgB 2 (Rhizobium etli (strain ATCC 51251 / DSM 11541 / JCM 21823 / NBRC 15573 / CFN 42)).